The sequence spans 60 residues: Mastoparan-V (60 aa).

Residues 1–27 (MKNTILILFTAFIALLGFFGMSAEALA) form the signal peptide. 4 AXPX repeats span residues 27–30 (ADPV), 31–34 (ADPL), 35–38 (AGPN), and 41–44 (ADPE). Positions 28–45 (DPVADPLAGPNAEADPEA) are excised as a propeptide. Position 59 is a leucine amide (Leu59).

The protein belongs to the MCD family. Mastoparan subfamily. Expressed by the venom gland.

It localises to the secreted. It is found in the target cell membrane. Functionally, antimicrobial and mast cell degranulating peptide. Has broad spectrum antibacterial activity against both Gram-positive and Gram-negative bacteria (S.aureus MIC=32-64 ug/ml, S.xylosus MIC=3 ug/ml, S.alactolyticus MIC=16 ug/ml, C.koseri MIC=4 ug/ml, E.coli MIC=8 ug/ml, K.pneumoniae MIC=64 ug/ml, P.aerugiosa MIC=256 ug/ml, S.choleraesuis MIC=32 ug/ml, S.typhimurium MIC=32 ug/ml, V.parahamelytics MIC=32 ug/ml). Affects membrane permeability of E.coli. Shows hemolytic activities on sheep, chicken and human erythrocytes. Its mast cell degranulation activity may be related to the activation of G-protein coupled receptors in mast cells as well as interaction with other proteins located in cell endosomal membranes in the mast cells. This chain is Mastoparan-V, found in Vespa velutina flavitarsus (Asian hornet).